A 98-amino-acid chain; its full sequence is Co-chaperonin GroES 5 (98 aa).

This sequence belongs to the GroES chaperonin family. Heptamer of 7 subunits arranged in a ring. Interacts with the chaperonin GroEL.

Its subcellular location is the cytoplasm. Functionally, together with the chaperonin GroEL, plays an essential role in assisting protein folding. The GroEL-GroES system forms a nano-cage that allows encapsulation of the non-native substrate proteins and provides a physical environment optimized to promote and accelerate protein folding. GroES binds to the apical surface of the GroEL ring, thereby capping the opening of the GroEL channel. The polypeptide is Co-chaperonin GroES 5 (Mesorhizobium japonicum (strain LMG 29417 / CECT 9101 / MAFF 303099) (Mesorhizobium loti (strain MAFF 303099))).